A 303-amino-acid polypeptide reads, in one-letter code: Elongation factor Ts (303 aa).

The interval 82–85 is involved in Mg(2+) ion dislocation from EF-Tu; the sequence is TDFV.

The protein belongs to the EF-Ts family.

The protein resides in the cytoplasm. Associates with the EF-Tu.GDP complex and induces the exchange of GDP to GTP. It remains bound to the aminoacyl-tRNA.EF-Tu.GTP complex up to the GTP hydrolysis stage on the ribosome. The chain is Elongation factor Ts from Clostridioides difficile (strain 630) (Peptoclostridium difficile).